The chain runs to 218 residues: uncharacterized protein (218 aa).

The tract at residues 1–67 (MARITNMGKR…KKKRSEYRRL (67 aa)) is disordered. Residues 29–39 (NSSNTNEESSS) are compositionally biased toward low complexity. Polar residues predominate over residues 40 to 49 (QDNMKASFGS). Positions 58–67 (KKKRSEYRRL) are enriched in basic residues. 3 CCHC-type zinc fingers span residues 77–94 (KFCF…DCPE), 100–117 (SICF…ACSK), and 124–141 (AKCF…QCEQ). The CCHC-type 4; atypical zinc-finger motif lies at 152-168 (CCKFCSSVHHLAKDCDQ).

This is an uncharacterized protein from Schizosaccharomyces pombe (strain 972 / ATCC 24843) (Fission yeast).